A 20-amino-acid chain; its full sequence is Cupiennin-6f (20 aa).

In terms of tissue distribution, expressed by the venom gland.

It localises to the secreted. The polypeptide is Cupiennin-6f (Cupiennius salei (American wandering spider)).